The following is an 801-amino-acid chain: Na(+)/H(+) antiporter subunit A1 (801 aa).

21 consecutive transmembrane segments (helical) span residues 4–25, 30–49, 79–101, 108–127, 131–153, 166–188, 208–230, 243–265, 270–289, 302–324, 339–361, 373–395, 429–451, 472–494, 526–548, 589–611, 621–641, 646–668, 672–694, 707–729, and 767–784; these read LHIA…YRFF, LGWF…LTLI, LGLL…SIGY, LGNF…GVVL, VIIL…SFWR, LIIT…IPTQ, FIFA…PFYI, SAYL…MTPI, QGWV…WASL, AFST…ISYH, AAIF…TGAV, LGGL…LSMA, YLFP…KFIM, ILML…FPGI, AFLS…SYWV, NNLV…SVPF, IRIF…LILF, LFSI…FFKA, ALTQ…YHLP, LTNA…IAYG, and LFES…YTMI.

This sequence belongs to the CPA3 antiporters (TC 2.A.63) subunit A family. May form a heterooligomeric complex that consists of seven subunits: mnhA1, mnhB1, mnhC1, mnhD1, mnhE1, mnhF1 and mnhG1.

It localises to the cell membrane. Its activity is regulated as follows. Na(+) extrusion is completely inhibited by the H(+) conductor carbonyl cyanide m-chlorophenylhydrazone (CCCP). In terms of biological role, mnh complex is a Na(+)/H(+) antiporter involved in Na(+) excretion. In Staphylococcus aureus (strain MSSA476), this protein is Na(+)/H(+) antiporter subunit A1 (mnhA1).